Here is a 239-residue protein sequence, read N- to C-terminus: Ribosomal RNA small subunit methyltransferase G (239 aa).

S-adenosyl-L-methionine contacts are provided by residues G77, F82, 128 to 129, and R147; that span reads AE. The segment at 216-239 is disordered; sequence KKQSQTPKKFPRKPGTPNKSPIEG.

Belongs to the methyltransferase superfamily. RNA methyltransferase RsmG family.

Its subcellular location is the cytoplasm. Its function is as follows. Specifically methylates the N7 position of guanine in position 535 of 16S rRNA. The sequence is that of Ribosomal RNA small subunit methyltransferase G from Bacillus licheniformis (strain ATCC 14580 / DSM 13 / JCM 2505 / CCUG 7422 / NBRC 12200 / NCIMB 9375 / NCTC 10341 / NRRL NRS-1264 / Gibson 46).